Reading from the N-terminus, the 212-residue chain is ATP-dependent Clp protease proteolytic subunit (212 aa).

The active-site Nucleophile is serine 112. Histidine 137 is a catalytic residue.

This sequence belongs to the peptidase S14 family. Fourteen ClpP subunits assemble into 2 heptameric rings which stack back to back to give a disk-like structure with a central cavity, resembling the structure of eukaryotic proteasomes.

The protein localises to the cytoplasm. The catalysed reaction is Hydrolysis of proteins to small peptides in the presence of ATP and magnesium. alpha-casein is the usual test substrate. In the absence of ATP, only oligopeptides shorter than five residues are hydrolyzed (such as succinyl-Leu-Tyr-|-NHMec, and Leu-Tyr-Leu-|-Tyr-Trp, in which cleavage of the -Tyr-|-Leu- and -Tyr-|-Trp bonds also occurs).. Cleaves peptides in various proteins in a process that requires ATP hydrolysis. Has a chymotrypsin-like activity. Plays a major role in the degradation of misfolded proteins. This is ATP-dependent Clp protease proteolytic subunit from Thiobacillus denitrificans (strain ATCC 25259 / T1).